A 284-amino-acid chain; its full sequence is Averufin oxidase A (284 aa).

An N-terminal signal peptide occupies residues 1–23 (MPTYALLGATGATGSAILRCLLA). 3 N-linked (GlcNAc...) asparagine glycosylation sites follow: Asn62, Asn86, and Asn190.

This sequence belongs to the avfA family.

The protein operates within mycotoxin biosynthesis. Functionally, averufin oxidase A; part of the fragmented gene cluster that mediates the biosynthesis of dothistromin (DOTH), a polyketide toxin very similar in structure to the aflatoxin precursor, versicolorin B. The first step of the pathway is the conversion of acetate to norsolorinic acid (NOR) and requires the fatty acid synthase subunits hexA and hexB, as well as the polyketide synthase pksA. PksA combines a hexanoyl starter unit and 7 malonyl-CoA extender units to synthesize the precursor NOR. The hexanoyl starter unit is provided to the acyl-carrier protein (ACP) domain by the fungal fatty acid synthase hexA/hexB. The second step is the conversion of NOR to averantin (AVN) and requires the norsolorinic acid ketoreductase nor1, which catalyzes the dehydration of norsolorinic acid to form (1'S)-averantin. The cytochrome P450 monooxygenase avnA then catalyzes the hydroxylation of AVN to 5'hydroxyaverantin (HAVN). The next step is performed by adhA that transforms HAVN to averufin (AVF). Averufin might then be converted to hydroxyversicolorone by cypX and avfA. Hydroxyversicolorone is further converted versiconal hemiacetal acetate (VHA) by moxY. VHA is then the substrate for the versiconal hemiacetal acetate esterase est1 to yield versiconal (VAL). Versicolorin B synthase vbsA then converts VAL to versicolorin B (VERB) by closing the bisfuran ring. Then, the activity of the versicolorin B desaturase verB leads to versicolorin A (VERA). DotB, a predicted chloroperoxidase, may perform epoxidation of the A-ring of VERA. Alternatively, a cytochrome P450, such as cypX or avnA could catalyze this step. It is also possible that another, uncharacterized, cytochrome P450 enzyme is responsible for this step. Opening of the epoxide could potentially be achieved by the epoxide hydrolase epoA. However, epoA seems not to be required for DOTH biosynthesis, but other epoxide hydrolases may have the ability to complement this hydrolysis. Alternatively, opening of the epoxide ring could be achieved non-enzymatically. The next step is the deoxygenation of ring A to yield the 5,8-dihydroxyanthraquinone which is most likely catalyzed by the NADPH dehydrogenase encoded by ver1. The last stages of DOTH biosynthesis are proposed to involve hydroxylation of the bisfuran. OrdB and norB might have oxidative roles here. An alternative possibility is that cytochrome P450 monoogenases such as avnA and cypX might perform these steps in addition to previously proposed steps. This Dothistroma septosporum (strain NZE10 / CBS 128990) (Red band needle blight fungus) protein is Averufin oxidase A.